Consider the following 150-residue polypeptide: UPF0178 protein PputGB1_5282 (150 aa).

It belongs to the UPF0178 family.

The protein is UPF0178 protein PputGB1_5282 of Pseudomonas putida (strain GB-1).